The following is a 20-amino-acid chain: Large ribosomal subunit protein uL10 (20 aa).

The protein belongs to the universal ribosomal protein uL10 family. As to quaternary structure, part of the ribosomal stalk of the 50S ribosomal subunit. The N-terminus interacts with L11 and the large rRNA to form the base of the stalk. The C-terminus forms an elongated spine to which L12 dimers bind in a sequential fashion forming a multimeric L10(L12)X complex.

In terms of biological role, forms part of the ribosomal stalk, playing a central role in the interaction of the ribosome with GTP-bound translation factors. The chain is Large ribosomal subunit protein uL10 (rplJ) from Citrobacter freundii.